The sequence spans 91 residues: Small membrane A-kinase anchor protein (91 aa).

Glycine 2 is lipidated: N-myristoyl glycine.

It belongs to the small membrane AKAP family. May be palmitoylated at Cys-3.

The protein resides in the cell membrane. Functionally, binds to type I regulatory subunits of protein kinase A and may anchor/target them to the plasma membrane. This Xenopus tropicalis (Western clawed frog) protein is Small membrane A-kinase anchor protein.